We begin with the raw amino-acid sequence, 231 residues long: Somatolactin (231 aa).

An N-terminal signal peptide occupies residues 1–24; the sequence is MLMFTAIQRGVWVALLWPHLLTAS. Intrachain disulfides connect C29–C39, C89–C205, and C222–C230. N35 and N145 each carry an N-linked (GlcNAc...) asparagine glycan.

The protein belongs to the somatotropin/prolactin family. Pituitary gland.

The protein localises to the secreted. The polypeptide is Somatolactin (Siganus guttatus (Orange-spotted spinefoot)).